Consider the following 533-residue polypeptide: Thromboxane-A synthase (533 aa).

The Cytoplasmic segment spans residues Met1 to Glu10. A helical transmembrane segment spans residues Val11–Tyr31. At Ser32–Gly75 the chain is on the lumenal side. A helical membrane pass occupies residues Pro76–Ile96. Topologically, residues Lys97–Arg223 are cytoplasmic. Residues Pro224 to Pro244 traverse the membrane as a helical segment. The Lumenal segment spans residues Asn245–Ala335. The helical transmembrane segment at Phe336 to Leu356 threads the bilayer. The Cytoplasmic portion of the chain corresponds to Leu357 to Arg533. Cys479 is a binding site for heme.

The protein belongs to the cytochrome P450 family. In terms of assembly, monomer. Heme serves as cofactor. As to expression, expressed in bone marrow, spleen, lung, thymus, liver, uterus, and macrophages.

Its subcellular location is the endoplasmic reticulum membrane. The enzyme catalyses prostaglandin H2 = thromboxane A2. It catalyses the reaction prostaglandin H2 = (12S)-hydroxy-(5Z,8E,10E)-heptadecatrienoate + malonaldehyde. It carries out the reaction a hydroperoxyeicosatetraenoate = an oxoeicosatetraenoate + H2O. The catalysed reaction is (15S)-hydroperoxy-(5Z,8Z,11Z,13E)-eicosatetraenoate = 15-oxo-(5Z,8Z,11Z,13E)-eicosatetraenoate + H2O. The enzyme catalyses (15S)-hydroperoxy-(5Z,8Z,11Z,13E)-eicosatetraenoate + AH2 = (15S)-hydroxy-(5Z,8Z,11Z,13E)-eicosatetraenoate + A + H2O. Catalyzes the conversion of prostaglandin H2 (PGH2) to thromboxane A2 (TXA2), a potent inducer of blood vessel constriction and platelet aggregation. Also cleaves PGH2 to 12-hydroxy-heptadecatrienoicacid (12-HHT) and malondialdehyde, which is known to act as a mediator of DNA damage. 12-HHT and malondialdehyde are formed stoichiometrically in the same amounts as TXA2. Additionally, displays dehydratase activity, toward (15S)-hydroperoxy-(5Z,8Z,11Z,13E)-eicosatetraenoate (15(S)-HPETE) producing 15-KETE and 15-HETE. The chain is Thromboxane-A synthase (Tbxas1) from Rattus norvegicus (Rat).